A 591-amino-acid chain; its full sequence is Probable catabolite repression protein creC (591 aa).

WD repeat units lie at residues 249–289, 330–371, 372–411, and 414–458; these read VNNS…ALFA, LANQ…DIFR, SYYG…IVAR, and GHNS…LHRP. The segment at 477–510 is disordered; the sequence is QHLNRHRADSGGNRTRSDSQETADTYNSYDPTVR. Over residues 496-506 the composition is skewed to polar residues; the sequence is QETADTYNSYD. Residues 530–567 form a WD 5 repeat; the sequence is VGEDPICWLGFQEDSIMTSSLEGHIRTWDRPREGINDN.

This sequence belongs to the WD repeat creC family. As to quaternary structure, interacts with creB.

Functionally, component of the regulatory network controlling carbon source utilization through ubiquitination and deubiquitination involving creA, creB, creC, creD and acrB. Required to prevent the proteolysis of the CreB deubiquitinating enzyme in the absence of carbon catabolite repression. CreB deubiquitinating enzyme stabilized in a complex with the CreC leads to the expression of genes such as those in the proline and quinate pathways. The protein is Probable catabolite repression protein creC (creC) of Aspergillus niger (strain ATCC MYA-4892 / CBS 513.88 / FGSC A1513).